The sequence spans 151 residues: Austinoid biosynthesis clusters protein F (151 aa).

The protein belongs to the trt14 isomerase family. Homodimer.

It functions in the pathway secondary metabolite biosynthesis; terpenoid biosynthesis. In terms of biological role, part of the gene cluster B that mediates the biosynthesis of the fungal meroterpenoid acetoxydehydroaustin. The first step of the pathway is the synthesis of 3,5-dimethylorsellinic acid by the polyketide synthase ausA. 3,5-dimethylorsellinic acid is then prenylated by the polyprenyl transferase ausN. Further epoxidation by the FAD-dependent monooxygenase ausM and cyclization by the probable terpene cyclase ausL lead to the formation of protoaustinoid A. Protoaustinoid A is then oxidized to spiro-lactone preaustinoid A3 by the combined action of the FAD-binding monooxygenases ausB and ausC, and the dioxygenase ausE. Acid-catalyzed keto-rearrangement and ring contraction of the tetraketide portion of preaustinoid A3 by ausJ lead to the formation of preaustinoid A4. The aldo-keto reductase ausK, with the help of ausH, is involved in the next step by transforming preaustinoid A4 into isoaustinone which is in turn hydroxylated by the P450 monooxygenase ausI to form austinolide. The cytochrome P450 monooxygenase ausG then modifies austinolide to austinol. Austinol is further acetylated to austin by the O-acetyltransferase ausP, which spontaneously changes to dehydroaustin. The cytochrome P450 monooxygenase then converts dehydroaustin is into 7-dehydrodehydroaustin. The hydroxylation catalyzed by ausR permits the second O-acetyltransferase ausQ to add an additional acetyl group to the molecule, leading to the formation of acetoxydehydroaustin. Due to genetic rearrangements of the clusters and the subsequent loss of some enzymes, the end product of the Penicillium brasilianum austinoid biosynthesis clusters is acetoxydehydroaustin. This chain is Austinoid biosynthesis clusters protein F, found in Penicillium brasilianum.